A 317-amino-acid polypeptide reads, in one-letter code: Acetyl-coenzyme A carboxylase carboxyl transferase subunit alpha (317 aa).

Residues 39–293 enclose the CoA carboxyltransferase C-terminal domain; the sequence is RLESRVNDAM…GDVIAKALAD (255 aa).

It belongs to the AccA family. In terms of assembly, acetyl-CoA carboxylase is a heterohexamer composed of biotin carboxyl carrier protein (AccB), biotin carboxylase (AccC) and two subunits each of ACCase subunit alpha (AccA) and ACCase subunit beta (AccD).

The protein resides in the cytoplasm. It catalyses the reaction N(6)-carboxybiotinyl-L-lysyl-[protein] + acetyl-CoA = N(6)-biotinyl-L-lysyl-[protein] + malonyl-CoA. It functions in the pathway lipid metabolism; malonyl-CoA biosynthesis; malonyl-CoA from acetyl-CoA: step 1/1. In terms of biological role, component of the acetyl coenzyme A carboxylase (ACC) complex. First, biotin carboxylase catalyzes the carboxylation of biotin on its carrier protein (BCCP) and then the CO(2) group is transferred by the carboxyltransferase to acetyl-CoA to form malonyl-CoA. The polypeptide is Acetyl-coenzyme A carboxylase carboxyl transferase subunit alpha (Agrobacterium fabrum (strain C58 / ATCC 33970) (Agrobacterium tumefaciens (strain C58))).